A 407-amino-acid polypeptide reads, in one-letter code: Probable tRNA sulfurtransferase (407 aa).

The THUMP domain maps to 61–165 (NEITYRLSKI…LDAIYMYEEV (105 aa)). ATP-binding positions include 183 to 184 (ML), 208 to 209 (HF), arginine 265, glycine 287, and glutamine 296.

This sequence belongs to the ThiI family.

It localises to the cytoplasm. The catalysed reaction is [ThiI sulfur-carrier protein]-S-sulfanyl-L-cysteine + a uridine in tRNA + 2 reduced [2Fe-2S]-[ferredoxin] + ATP + H(+) = [ThiI sulfur-carrier protein]-L-cysteine + a 4-thiouridine in tRNA + 2 oxidized [2Fe-2S]-[ferredoxin] + AMP + diphosphate. It carries out the reaction [ThiS sulfur-carrier protein]-C-terminal Gly-Gly-AMP + S-sulfanyl-L-cysteinyl-[cysteine desulfurase] + AH2 = [ThiS sulfur-carrier protein]-C-terminal-Gly-aminoethanethioate + L-cysteinyl-[cysteine desulfurase] + A + AMP + 2 H(+). The protein operates within cofactor biosynthesis; thiamine diphosphate biosynthesis. In terms of biological role, catalyzes the ATP-dependent transfer of a sulfur to tRNA to produce 4-thiouridine in position 8 of tRNAs, which functions as a near-UV photosensor. Also catalyzes the transfer of sulfur to the sulfur carrier protein ThiS, forming ThiS-thiocarboxylate. This is a step in the synthesis of thiazole, in the thiamine biosynthesis pathway. The sulfur is donated as persulfide by IscS. This chain is Probable tRNA sulfurtransferase, found in Staphylococcus aureus (strain MSSA476).